The chain runs to 539 residues: Chaperonin GroEL (539 aa).

ATP-binding positions include 29-32 (TLGP), 86-90 (DGTTT), Gly-413, 477-479 (DAL), and Asp-493.

Belongs to the chaperonin (HSP60) family. As to quaternary structure, forms a cylinder of 14 subunits composed of two heptameric rings stacked back-to-back. Interacts with the co-chaperonin GroES.

Its subcellular location is the cytoplasm. It carries out the reaction ATP + H2O + a folded polypeptide = ADP + phosphate + an unfolded polypeptide.. Its function is as follows. Together with its co-chaperonin GroES, plays an essential role in assisting protein folding. The GroEL-GroES system forms a nano-cage that allows encapsulation of the non-native substrate proteins and provides a physical environment optimized to promote and accelerate protein folding. In Clostridium perfringens (strain ATCC 13124 / DSM 756 / JCM 1290 / NCIMB 6125 / NCTC 8237 / Type A), this protein is Chaperonin GroEL.